A 161-amino-acid chain; its full sequence is Phosphopantetheine adenylyltransferase (161 aa).

Serine 11 lines the substrate pocket. ATP is bound by residues 11-12 (SF) and histidine 19. Residues lysine 43, leucine 75, and arginine 89 each contribute to the substrate site. Residues 90 to 92 (GLR), glutamate 100, and 125 to 131 (YSYLSSS) contribute to the ATP site.

It belongs to the bacterial CoaD family. Homohexamer. Mg(2+) is required as a cofactor.

It localises to the cytoplasm. It catalyses the reaction (R)-4'-phosphopantetheine + ATP + H(+) = 3'-dephospho-CoA + diphosphate. Its pathway is cofactor biosynthesis; coenzyme A biosynthesis; CoA from (R)-pantothenate: step 4/5. Reversibly transfers an adenylyl group from ATP to 4'-phosphopantetheine, yielding dephospho-CoA (dPCoA) and pyrophosphate. The protein is Phosphopantetheine adenylyltransferase of Geotalea daltonii (strain DSM 22248 / JCM 15807 / FRC-32) (Geobacter daltonii).